The primary structure comprises 313 residues: Acetyl-coenzyme A carboxylase carboxyl transferase subunit alpha (313 aa).

The region spanning 42–292 (KSDKLLRDTY…GAAIGEELDK (251 aa)) is the CoA carboxyltransferase C-terminal domain.

Belongs to the AccA family. In terms of assembly, acetyl-CoA carboxylase is a heterohexamer composed of biotin carboxyl carrier protein (AccB), biotin carboxylase (AccC) and two subunits each of ACCase subunit alpha (AccA) and ACCase subunit beta (AccD).

It localises to the cytoplasm. It catalyses the reaction N(6)-carboxybiotinyl-L-lysyl-[protein] + acetyl-CoA = N(6)-biotinyl-L-lysyl-[protein] + malonyl-CoA. The protein operates within lipid metabolism; malonyl-CoA biosynthesis; malonyl-CoA from acetyl-CoA: step 1/1. Functionally, component of the acetyl coenzyme A carboxylase (ACC) complex. First, biotin carboxylase catalyzes the carboxylation of biotin on its carrier protein (BCCP) and then the CO(2) group is transferred by the carboxyltransferase to acetyl-CoA to form malonyl-CoA. In Rhizorhabdus wittichii (strain DSM 6014 / CCUG 31198 / JCM 15750 / NBRC 105917 / EY 4224 / RW1) (Sphingomonas wittichii), this protein is Acetyl-coenzyme A carboxylase carboxyl transferase subunit alpha.